The following is a 279-amino-acid chain: Plasmodesmata-located protein 8 (279 aa).

The signal sequence occupies residues 1–20; sequence MRRLFLFSLLFLFFYSSSSS. Topologically, residues 21–253 are extracellular; the sequence is RSSSESHIFI…PTNGDHVGKS (233 aa). 2 consecutive Gnk2-homologous domains span residues 27–135 and 137–237; these read HIFI…TNDF and GKPD…GSGY. Cystine bridges form between Cys-34–Cys-113, Cys-89–Cys-98, Cys-101–Cys-126, Cys-148–Cys-215, Cys-191–Cys-200, and Cys-203–Cys-228. The chain crosses the membrane as a helical span at residues 254 to 274; that stretch reads IAIIVGVIAGFAILVVLLSLC. A necessary and sufficient for plasmodesmal targeting region spans residues 254 to 274; it reads IAIIVGVIAGFAILVVLLSLC. Residues 275-279 are Cytoplasmic-facing; sequence RNSMH.

It belongs to the cysteine-rich repeat secretory protein family. Plasmodesmata-located proteins (PDLD) subfamily. As to quaternary structure, interacts with ACBP6; interaction occurs at the plasma membrane. In terms of assembly, (Microbial infection) Interacts with Grapevine fanleaf virus (GFLV) 2B-MP. As to expression, highly expressed in pollen, lateral root and elongation zone. Higher expression in the reproductive tissues (flowers and buds) than in vegetative organs (leaves and stems). High expression in shoot and root phloem companion cells (at protein level).

Its subcellular location is the cell membrane. The protein localises to the cell junction. It is found in the plasmodesma. In terms of biological role, modulates cell-to-cell trafficking. The polypeptide is Plasmodesmata-located protein 8 (Arabidopsis thaliana (Mouse-ear cress)).